The chain runs to 220 residues: UPF0319 protein YccT (220 aa).

The signal sequence occupies residues 1–20 (MKTGALATFLALCLPVTVFA).

This sequence belongs to the UPF0319 family.

The chain is UPF0319 protein YccT from Salmonella agona (strain SL483).